Here is a 543-residue protein sequence, read N- to C-terminus: CTP synthase (543 aa).

An amidoligase domain region spans residues 1–265 (MTRYVFITGG…DREVLRHFGL (265 aa)). CTP is bound at residue Ser-13. Residue Ser-13 coordinates UTP. 14–19 (SLGKGI) is a binding site for ATP. Tyr-54 contributes to the L-glutamine binding site. Position 71 (Asp-71) interacts with ATP. Mg(2+) is bound by residues Asp-71 and Glu-139. Residues 146–148 (DIE), 186–191 (KTKPTQ), and Lys-222 each bind CTP. Residues 186–191 (KTKPTQ) and Lys-222 each bind UTP. Position 240 (Val-240) interacts with ATP. Residues 291 to 542 (TIAVVGKYTN…IEAAVKQMRL (252 aa)) form the Glutamine amidotransferase type-1 domain. An L-glutamine-binding site is contributed by Gly-353. The active-site Nucleophile; for glutamine hydrolysis is the Cys-380. Residues 381–384 (FGMQ), Glu-404, and Arg-470 contribute to the L-glutamine site. Residues His-515 and Glu-517 contribute to the active site.

The protein belongs to the CTP synthase family. In terms of assembly, homotetramer.

It catalyses the reaction UTP + L-glutamine + ATP + H2O = CTP + L-glutamate + ADP + phosphate + 2 H(+). The catalysed reaction is L-glutamine + H2O = L-glutamate + NH4(+). It carries out the reaction UTP + NH4(+) + ATP = CTP + ADP + phosphate + 2 H(+). It participates in pyrimidine metabolism; CTP biosynthesis via de novo pathway; CTP from UDP: step 2/2. With respect to regulation, allosterically activated by GTP, when glutamine is the substrate; GTP has no effect on the reaction when ammonia is the substrate. The allosteric effector GTP functions by stabilizing the protein conformation that binds the tetrahedral intermediate(s) formed during glutamine hydrolysis. Inhibited by the product CTP, via allosteric rather than competitive inhibition. Catalyzes the ATP-dependent amination of UTP to CTP with either L-glutamine or ammonia as the source of nitrogen. Regulates intracellular CTP levels through interactions with the four ribonucleotide triphosphates. The sequence is that of CTP synthase from Acidiphilium cryptum (strain JF-5).